A 730-amino-acid polypeptide reads, in one-letter code: Elongation factor 2 (730 aa).

The region spanning D19–Y229 is the tr-type G domain. Residues A28–T35, D94–H98, and N148–D151 each bind GTP. At H597 the chain carries Diphthamide.

This sequence belongs to the TRAFAC class translation factor GTPase superfamily. Classic translation factor GTPase family. EF-G/EF-2 subfamily.

It localises to the cytoplasm. Functionally, catalyzes the GTP-dependent ribosomal translocation step during translation elongation. During this step, the ribosome changes from the pre-translocational (PRE) to the post-translocational (POST) state as the newly formed A-site-bound peptidyl-tRNA and P-site-bound deacylated tRNA move to the P and E sites, respectively. Catalyzes the coordinated movement of the two tRNA molecules, the mRNA and conformational changes in the ribosome. This chain is Elongation factor 2, found in Methanosphaera stadtmanae (strain ATCC 43021 / DSM 3091 / JCM 11832 / MCB-3).